Reading from the N-terminus, the 1004-residue chain is Ovochymase-2 (1004 aa).

The signal sequence occupies residues 1–19 (MPTRNLLLGSILLSLAVKG). A propeptide spans 20–45 (DPGPHRGARCGVSPLGSATELNYLSR) (activation peptide). Residues 46–295 (IVGGRESKKG…LLGWVSSQLN (250 aa)) form the Peptidase S1 1 domain. An intrachain disulfide couples C71 to C87. H86 serves as the catalytic Charge relay system. Ca(2+) is bound at residue E113. An N-linked (GlcNAc...) asparagine glycan is attached at N128. D136 (charge relay system) is an active-site residue. Intrachain disulfides connect C170/C240, C201/C219, and C230/C259. S234 (charge relay system) is an active-site residue. 2 CUB domains span residues 309 to 419 (QDGV…YSAV) and 429 to 541 (CGSF…FTFV). The N-linked (GlcNAc...) asparagine glycan is linked to N351. C363 and C382 are joined by a disulfide. The N-linked (GlcNAc...) asparagine glycan is linked to N408. Disulfide bonds link C429–C456 and C483–C504. A compositionally biased stretch (polar residues) spans 547-558 (VEDSRQGNMPST). Residues 547–566 (VEDSRQGNMPSTNKKETTAQ) are disordered. The Peptidase S1 2 domain occupies 580–820 (IYNSIAKVEE…FIDWIRQIMS (241 aa)). A propeptide spans 584-1004 (IAKVEEAVPH…VVPDSDSSEP (421 aa)) (activation peptide). 4 disulfides stabilise this stretch: C609/C625, C706/C776, C737/C754, and C766/C796. N763 carries N-linked (GlcNAc...) asparagine glycosylation. The N-linked (GlcNAc...) asparagine glycan is linked to N940.

This sequence belongs to the peptidase S1 family. The catalytically inactive 110 kDa form is processed both N- and C-terminally to give rise to the 66 kDa catalytically active form. Specifically expressed in the pars recta oviduct.

It localises to the secreted. It catalyses the reaction Preferential cleavage at 371-Gly-Ser-Arg-|-Trp-374 of glycoprotein gp43 in Xenopus laevis coelemic egg envelope to yield gp41.. Its function is as follows. Converts the glycoprotein envelope surrounding the egg from an unfertilizable to a fertilizable form during its transit through the pars recta portion of the oviduct by selectively hydrolyzing the envelope glycoprotein gp43. The egg envelope is converted to a sperm-penetrable form, via an increase in sperm binding. This is Ovochymase-2 (ovch2) from Xenopus laevis (African clawed frog).